The sequence spans 286 residues: Transcription factor bHLH137 (286 aa).

Residues 63–84 show a composition bias toward polar residues; sequence SGSEKLANTTKTATTGSSSCDQ. The segment at 63-149 is disordered; the sequence is SGSEKLANTT…RGQATDSHSL (87 aa). The bHLH domain maps to 142–192; the sequence is QATDSHSLAERVRREKISERMRTLQNLVPGCDKVTGKALMLDEIINYVQTL.

Homodimer.

The protein resides in the nucleus. The chain is Transcription factor bHLH137 (BHLH137) from Arabidopsis thaliana (Mouse-ear cress).